The following is a 592-amino-acid chain: MLTEFNSIPATEAEQGIVSDLVRTLGPISFTLQQTADRIPTIWIDRDIVHAVLRHLRDGATRRFQMLYDLTAIDERQRVHRDGLPKSDFTLVYHLVSFERNDDVRVKVPLAEGALEVQSIADIWPNANWYEREVWDMFGIGFAGHPTLFRILTPPTWTGHPLRKDYIARATEMGPYILTEEKERAEQEALRFNPEAWGMKRHSENSDFMFLNLGPNHPSVHGVFRIILQLEGEEIVDAVPEIGFHHRGAEKMAERQSWHTYIPYTDRIDYLGGVMNNFPYVMAVERLAGIEVPSRAQMIRIMLAELFRIASHLVFYGTMSQDVGQLSPVFYMFSDRERVFQIIEAICGFRMHPAWFRIGGVAADLPQGWDRMIRDYLGYQSKRLDEYDKLVMRNRLFKARTIGVGAYTLEEALDWGVTGPGLRACGLGWDYRRQRPYSGYDQLEFDIPICHNGDCYDRVVVHIEEIRQSLRIIRQCLDNMPPGPYKSDHRLTTPPLKERTMQDIETLITHFLNVSWGPVLPPGEAMVSIEATKGINGYYLVADGDTVSYRTRIRTPSFPHLQMIPLISRGAYVADLIAIIGSIDFVMADVDR.

Residues 1–183 are NADH dehydrogenase I subunit C; it reads MLTEFNSIPA…GPYILTEEKE (183 aa). The tract at residues 207-592 is NADH dehydrogenase I subunit D; it reads DFMFLNLGPN…IDFVMADVDR (386 aa).

The protein in the N-terminal section; belongs to the complex I 30 kDa subunit family. In the C-terminal section; belongs to the complex I 49 kDa subunit family. In terms of assembly, NDH-1 is composed of 13 different subunits. Subunits NuoB, CD, E, F, and G constitute the peripheral sector of the complex.

It is found in the cell inner membrane. The catalysed reaction is a quinone + NADH + 5 H(+)(in) = a quinol + NAD(+) + 4 H(+)(out). In terms of biological role, NDH-1 shuttles electrons from NADH, via FMN and iron-sulfur (Fe-S) centers, to quinones in the respiratory chain. The immediate electron acceptor for the enzyme in this species is believed to be ubiquinone. Couples the redox reaction to proton translocation (for every two electrons transferred, four hydrogen ions are translocated across the cytoplasmic membrane), and thus conserves the redox energy in a proton gradient. In Acidiphilium cryptum (strain JF-5), this protein is NADH-quinone oxidoreductase subunit C/D.